The primary structure comprises 115 residues: Large ribosomal subunit protein bL19 (115 aa).

This sequence belongs to the bacterial ribosomal protein bL19 family.

In terms of biological role, this protein is located at the 30S-50S ribosomal subunit interface and may play a role in the structure and function of the aminoacyl-tRNA binding site. The chain is Large ribosomal subunit protein bL19 from Sodalis glossinidius (strain morsitans).